We begin with the raw amino-acid sequence, 152 residues long: Transcriptional regulator MraZ (152 aa).

2 SpoVT-AbrB domains span residues Val5–Glu52 and Ala81–Gln124.

Belongs to the MraZ family. In terms of assembly, forms oligomers.

The protein resides in the cytoplasm. It localises to the nucleoid. This is Transcriptional regulator MraZ from Actinobacillus pleuropneumoniae serotype 5b (strain L20).